The chain runs to 535 residues: Alpha-1,3-mannosyl-glycoprotein 4-beta-N-acetylglucosaminyltransferase A (535 aa).

Topologically, residues 1–6 are cytoplasmic; it reads MRLRNG. A helical; Signal-anchor for type II membrane protein membrane pass occupies residues 7 to 27; sequence TVATVLVFITTFLSLSWYTAW. Residues 28–54 adopt a coiled-coil conformation; that stretch reads QNGKEKLIAYQREFHALKERLRIAEHR. The Lumenal segment spans residues 28–535; the sequence is QNGKEKLIAY…NEIHIKKMTN (508 aa). N-linked (GlcNAc...) asparagine glycans are attached at residues N77, N85, and N458.

This sequence belongs to the glycosyltransferase 54 family. A divalent metal cation serves as cofactor. N-glycosylated.

It localises to the golgi apparatus membrane. Its subcellular location is the secreted. It carries out the reaction N(4)-{beta-D-GlcNAc-(1-&gt;2)-alpha-D-Man-(1-&gt;3)-[beta-D-GlcNAc-(1-&gt;2)-alpha-D-Man-(1-&gt;6)]-beta-D-Man-(1-&gt;4)-beta-D-GlcNAc-(1-&gt;4)-beta-D-GlcNAc}-L-asparaginyl-[protein] + UDP-N-acetyl-alpha-D-glucosamine = N(4)-{beta-D-GlcNAc-(1-&gt;2)-[beta-D-GlcNAc-(1-&gt;4)]-alpha-D-Man-(1-&gt;3)-[beta-D-GlcNAc-(1-&gt;2)-alpha-D-Man-(1-&gt;6)]-beta-D-Man-(1-&gt;4)-beta-D-GlcNAc-(1-&gt;4)-beta-D-GlcNAc}-L-asparaginyl-[protein] + UDP + H(+). The catalysed reaction is an N(4)-{beta-D-GlcNAc-(1-&gt;2)-alpha-D-Man-(1-&gt;3)-[alpha-D-Man-(1-&gt;6)]-beta-D-Man-(1-&gt;4)-beta-D-GlcNAc-(1-&gt;4)-beta-D-GlcNAc}-L-asparaginyl-[protein] + UDP-N-acetyl-alpha-D-glucosamine = an N(4)-{beta-D-GlcNAc-(1-&gt;2)-[beta-D-GlcNAc-(1-&gt;4)]-alpha-D-Man-(1-&gt;3)-[alpha-D-Man-(1-&gt;6)]-beta-D-Man-(1-&gt;4)-beta-D-GlcNAc-(1-&gt;4)-beta-D-GlcNAc}-L-asparaginyl-[protein] + UDP + H(+). It catalyses the reaction an N(4)-{beta-D-GlcNAc-(1-&gt;2)-alpha-D-Man-(1-&gt;3)-[beta-D-GlcNAc-(1-&gt;2)-[beta-D-GlcNAc-(1-&gt;6)]-alpha-D-Man-(1-&gt;6)]-beta-D-Man-(1-&gt;4)-beta-D-GlcNAc-(1-&gt;4)-beta-D-GlcNAc}-L-asparaginyl-[protein] + UDP-N-acetyl-alpha-D-glucosamine = an N(4)-{beta-D-GlcNAc-(1-&gt;2)-[beta-D-GlcNAc-(1-&gt;4)]-alpha-D-Man-(1-&gt;3)-[beta-D-GlcNAc-(1-&gt;2)-[beta-D-GlcNAc-(1-&gt;6)]-alpha-D-Man-(1-&gt;6)]-beta-D-Man-(1-&gt;4)-beta-D-GlcNAc-(1-&gt;4)-beta-D-GlcNAc}-L-asparaginyl-[protein] + UDP + H(+). The enzyme catalyses an N(4)-{beta-D-GlcNAc-(1-&gt;2)-alpha-D-Man-(1-&gt;3)-[beta-D-GlcNAc-(1-&gt;2)-alpha-D-Man-(1-&gt;6)]-beta-D-Man-(1-&gt;4)-beta-D-GlcNAc-(1-&gt;4)-[alpha-L-Fuc-(1-&gt;6)]-beta-D-GlcNAc}-L-asparaginyl-[protein] + UDP-N-acetyl-alpha-D-glucosamine = N(4)-{beta-D-GlcNAc-(1-&gt;2)-[beta-D-GlcNAc-(1-&gt;4)]-alpha-D-Man-(1-&gt;3)-[beta-D-GlcNAc-(1-&gt;2)-alpha-D-Man-(1-&gt;6)]-beta-D-Man-(1-&gt;4)-beta-D-GlcNAc-(1-&gt;4)-[alpha-L-Fuc-(1-&gt;6)]-beta-D-GlcNAc}-asparaginyl-[protein] + UDP + H(+). It carries out the reaction an N(4)-{beta-D-GlcNAc-(1-&gt;2)-alpha-D-Man-(1-&gt;3)-[beta-D-Gal-(1-&gt;4)-beta-D-GlcNAc-(1-&gt;2)-alpha-D-Man-(1-&gt;6)]-beta-D-Man-(1-&gt;4)-beta-D-GlcNAc-(1-&gt;4)-beta-D-GlcNAc}-L-asparaginyl-[protein] + UDP-N-acetyl-alpha-D-glucosamine = an N(4)-{beta-D-GlcNAc-(1-&gt;2)-[beta-D-GlcNAc-(1-&gt;4)]-alpha-D-Man-(1-&gt;3)-[beta-D-Gal-(1-&gt;4)-beta-D-GlcNAc-(1-&gt;2)-alpha-D-Man-(1-&gt;6)]-beta-D-Man-(1-&gt;4)-beta-D-GlcNAc-(1-&gt;4)-beta-D-GlcNAc}-L-asparaginyl-[protein] + UDP + H(+). The catalysed reaction is N(4)-{beta-D-GlcNAc-(1-&gt;2)-alpha-D-Man-(1-&gt;3)-[alpha-D-Man-(1-&gt;3)-{alpha-D-Man-(1-&gt;6)}-alpha-D-Man-(1-&gt;6)]-beta-D-Man-(1-&gt;4)-beta-D-GlcNAc-(1-&gt;4)-beta-D-GlcNAc}-asparaginyl-[protein] + UDP-N-acetyl-alpha-D-glucosamine = N(4)-{beta-D-GlcNAc-(1-&gt;2)-[beta-D-GlcNAc-(1-&gt;4)]-alpha-D-Man-(1-&gt;3)-[alpha-D-Man-(1-&gt;3)-{alpha-D-Man-(1-&gt;6)}-alpha-D-Man-(1-&gt;6)]-beta-D-Man-(1-&gt;4)-beta-D-GlcNAc-(1-&gt;4)-beta-D-GlcNAc}-asparaginyl-[protein] + UDP + H(+). It catalyses the reaction N(4)-{beta-D-GlcNAc-(1-&gt;2)-alpha-D-Man-(1-&gt;3)-beta-D-Man-(1-&gt;4)-beta-D-GlcNAc-(1-&gt;4)-beta-D-GlcNAc}-asparaginyl-[protein] + UDP-N-acetyl-alpha-D-glucosamine = N(4)-{beta-D-GlcNAc-(1-&gt;2)-[beta-D-GlcNAc-(1-&gt;4)]-alpha-D-Man-(1-&gt;3)-beta-D-Man-(1-&gt;4)-beta-D-GlcNAc-(1-&gt;4)-beta-D-GlcNAc}-asparaginyl-[protein] + UDP + H(+). Its pathway is protein modification; protein glycosylation. Its activity is regulated as follows. Inhibited by UDP. Functionally, glycosyltransferase that catalyze the transfer of GlcNAc from UDP-GlcNAc to the GlcNAcbeta1-2Manalpha1-3 arm of the core structure of N-linked glycans through a beta1-4 linkage and participates in the production of tri- and tetra-antennary N-linked sugar chains. Involved in glucose transport by mediating SLC2A2/GLUT2 glycosylation, thereby controlling cell-surface expression of SLC2A2 in pancreatic beta cells. This chain is Alpha-1,3-mannosyl-glycoprotein 4-beta-N-acetylglucosaminyltransferase A, found in Gallus gallus (Chicken).